Consider the following 130-residue polypeptide: MGTDFSASHCANCSAVGFILEPACEPCKRSTLDWPGGASEVSGRYSFAENSSLSSLIASSHSSTPFSADGSLAGVRTDDWKRATHVPLCHRRRGLTNIYLLAQCSIIFTSDPYLSIFLLKTIAAVFSVRV.

This is an uncharacterized protein from Saccharomyces cerevisiae (strain ATCC 204508 / S288c) (Baker's yeast).